The following is a 398-amino-acid chain: ATP-dependent RNA helicase eIF4A (398 aa).

The Q motif motif lies at Asp-25–Gln-53. In terms of domain architecture, Helicase ATP-binding spans Ile-56 to Ile-226. An ATP-binding site is contributed by Ala-69 to Thr-76. The short motif at Asp-174–Asp-177 is the DEAD box element. The region spanning Gly-237–Ile-398 is the Helicase C-terminal domain.

This sequence belongs to the DEAD box helicase family. eIF4A subfamily. In terms of assembly, component of the eIF4F complex, which composition varies with external and internal environmental conditions. It is composed of at least eIF4A, eIF4E and eIF4G.

Its subcellular location is the cytoplasm. The catalysed reaction is ATP + H2O = ADP + phosphate + H(+). ATP-dependent RNA helicase which is a subunit of the eIF4F complex involved in cap recognition and is required for mRNA binding to ribosome. In the current model of translation initiation, eIF4A unwinds RNA secondary structures in the 5'-UTR of mRNAs which is necessary to allow efficient binding of the small ribosomal subunit, and subsequent scanning for the initiator codon. The sequence is that of ATP-dependent RNA helicase eIF4A (TIF1) from Coccidioides immitis (strain RS) (Valley fever fungus).